We begin with the raw amino-acid sequence, 459 residues long: Putrescine aminotransferase (459 aa).

Pyridoxal 5'-phosphate is bound by residues glycine 150 to threonine 151 and glutamine 274. Lysine 300 is modified (N6-(pyridoxal phosphate)lysine). Residue threonine 332 coordinates pyridoxal 5'-phosphate.

The protein belongs to the class-III pyridoxal-phosphate-dependent aminotransferase family. Putrescine aminotransferase subfamily. The cofactor is pyridoxal 5'-phosphate.

The catalysed reaction is an alkane-alpha,omega-diamine + 2-oxoglutarate = an omega-aminoaldehyde + L-glutamate. It carries out the reaction putrescine + 2-oxoglutarate = 1-pyrroline + L-glutamate + H2O. The enzyme catalyses cadaverine + 2-oxoglutarate = 5-aminopentanal + L-glutamate. It functions in the pathway amine and polyamine degradation; putrescine degradation; 4-aminobutanal from putrescine (transaminase route): step 1/1. Catalyzes the aminotransferase reaction from putrescine to 2-oxoglutarate, leading to glutamate and 4-aminobutanal, which spontaneously cyclizes to form 1-pyrroline. This is the first step in one of two pathways for putrescine degradation, where putrescine is converted into 4-aminobutanoate (gamma-aminobutyrate or GABA) via 4-aminobutanal. Also functions as a cadaverine transaminase in a a L-lysine degradation pathway to succinate that proceeds via cadaverine, glutarate and L-2-hydroxyglutarate. The protein is Putrescine aminotransferase of Salmonella agona (strain SL483).